The chain runs to 142 residues: Cell wall-binding protein YqgA (142 aa).

A signal peptide spans 1–28 (MKQGKFSVFLILLLMLTLVVAPKEKAEA).

In terms of assembly, found in a complex with F(1)F(0) ATP synthase and SpoIIIJ and YqjG.

Its subcellular location is the secreted. It localises to the cell wall. The polypeptide is Cell wall-binding protein YqgA (yqgA) (Bacillus subtilis (strain 168)).